A 277-amino-acid polypeptide reads, in one-letter code: Glycerol-3-phosphate acyltransferase (277 aa).

5 helical membrane-spanning segments follow: residues 3 to 23 (LFIF…AIIV), 55 to 75 (IMVM…AKLL), 79 to 99 (PVTV…PVFF), 111 to 131 (IGAL…TWLL), and 155 to 175 (LILV…ILVL). The tract at residues 207–277 (SPATSAEQEF…PKTKTVKEKE (71 aa)) is disordered. Positions 216 to 239 (FPGKEVIDTNIDETEKTEQAEAVK) are enriched in basic and acidic residues. 2 stretches are compositionally biased toward basic residues: residues 240-253 (KPKV…AKKT) and 262-271 (KPKSTKPKTK).

This sequence belongs to the PlsY family. In terms of assembly, probably interacts with PlsX.

The protein resides in the cell inner membrane. It catalyses the reaction an acyl phosphate + sn-glycerol 3-phosphate = a 1-acyl-sn-glycero-3-phosphate + phosphate. It participates in lipid metabolism; phospholipid metabolism. Catalyzes the transfer of an acyl group from acyl-phosphate (acyl-PO(4)) to glycerol-3-phosphate (G3P) to form lysophosphatidic acid (LPA). This enzyme utilizes acyl-phosphate as fatty acyl donor, but not acyl-CoA or acyl-ACP. This chain is Glycerol-3-phosphate acyltransferase, found in Legionella pneumophila (strain Corby).